The chain runs to 234 residues: Orotate phosphoribosyltransferase (234 aa).

Lys-30 is a binding site for 5-phospho-alpha-D-ribose 1-diphosphate. 38-39 (FF) is an orotate binding site. Residues 76 to 77 (YK), Arg-103, Lys-104, Lys-107, His-109, and 128 to 136 (DDVITAGTA) each bind 5-phospho-alpha-D-ribose 1-diphosphate. Orotate is bound by residues Thr-132 and Arg-160.

The protein belongs to the purine/pyrimidine phosphoribosyltransferase family. PyrE subfamily. Homodimer. The cofactor is Mg(2+).

The enzyme catalyses orotidine 5'-phosphate + diphosphate = orotate + 5-phospho-alpha-D-ribose 1-diphosphate. It functions in the pathway pyrimidine metabolism; UMP biosynthesis via de novo pathway; UMP from orotate: step 1/2. Functionally, catalyzes the transfer of a ribosyl phosphate group from 5-phosphoribose 1-diphosphate to orotate, leading to the formation of orotidine monophosphate (OMP). The sequence is that of Orotate phosphoribosyltransferase from Chromohalobacter salexigens (strain ATCC BAA-138 / DSM 3043 / CIP 106854 / NCIMB 13768 / 1H11).